Here is a 233-residue protein sequence, read N- to C-terminus: Large ribosomal subunit protein eL6y (233 aa).

The segment covering 48 to 72 (HDAKSKVDAPVEKPPKFYPAEDVKK) has biased composition (basic and acidic residues). The disordered stretch occupies residues 48-82 (HDAKSKVDAPVEKPPKFYPAEDVKKPLPNRRTAKP).

It belongs to the eukaryotic ribosomal protein eL6 family.

The protein is Large ribosomal subunit protein eL6y (RPL6B) of Arabidopsis thaliana (Mouse-ear cress).